Here is a 186-residue protein sequence, read N- to C-terminus: GMP synthase [glutamine-hydrolyzing] subunit A (186 aa).

One can recognise a Glutamine amidotransferase type-1 domain in the interval 3 to 186 (MILIINNHGQ…FENFYDVCRS (184 aa)). Catalysis depends on C77, which acts as the Nucleophile. Catalysis depends on residues H164 and E166.

As to quaternary structure, heterodimer composed of a glutamine amidotransferase subunit (A) and a GMP-binding subunit (B).

The enzyme catalyses XMP + L-glutamine + ATP + H2O = GMP + L-glutamate + AMP + diphosphate + 2 H(+). It functions in the pathway purine metabolism; GMP biosynthesis; GMP from XMP (L-Gln route): step 1/1. Functionally, catalyzes the synthesis of GMP from XMP. This is GMP synthase [glutamine-hydrolyzing] subunit A from Methanothermobacter thermautotrophicus (strain ATCC 29096 / DSM 1053 / JCM 10044 / NBRC 100330 / Delta H) (Methanobacterium thermoautotrophicum).